The primary structure comprises 414 residues: tRNA(Ile)-lysidine synthase (414 aa).

13 to 18 (SGGIDS) lines the ATP pocket.

Belongs to the tRNA(Ile)-lysidine synthase family.

The protein localises to the cytoplasm. The enzyme catalyses cytidine(34) in tRNA(Ile2) + L-lysine + ATP = lysidine(34) in tRNA(Ile2) + AMP + diphosphate + H(+). In terms of biological role, ligates lysine onto the cytidine present at position 34 of the AUA codon-specific tRNA(Ile) that contains the anticodon CAU, in an ATP-dependent manner. Cytidine is converted to lysidine, thus changing the amino acid specificity of the tRNA from methionine to isoleucine. The polypeptide is tRNA(Ile)-lysidine synthase (Thermotoga sp. (strain RQ2)).